A 27-amino-acid chain; its full sequence is Chitinase 47 kDa (27 aa).

The 25-residue stretch at 3–27 (SKVVGYFTEWGTYDRKYYVKNIEXS) folds into the GH18 domain.

The protein belongs to the glycosyl hydrolase 18 family. Chitinase class II subfamily. As to quaternary structure, homodimer.

It catalyses the reaction Random endo-hydrolysis of N-acetyl-beta-D-glucosaminide (1-&gt;4)-beta-linkages in chitin and chitodextrins.. Able to cleave chitin oligomers from N=3 to 6. The sequence is that of Chitinase 47 kDa from Streptomyces olivaceoviridis (Streptomyces corchorusii).